A 330-amino-acid chain; its full sequence is Stimulated by retinoic acid gene 8 protein homolog (330 aa).

The Nuclear localization signal (NLS) motif lies at 50–55; the sequence is RVARRR. Residues 88 to 112 are a coiled coil; it reads QVLNKAKSHIPELEQTLDNLLKLKA.

In terms of assembly, interacts with XPO1. Interacts with MEIOSIN. Phosphorylated. In terms of tissue distribution, expressed specifically in testis and fetal ovaries.

Its subcellular location is the cytoplasm. The protein localises to the nucleus. Its function is as follows. Meiosis-inducer required for the transition into meiosis for both female and male germ cells. In female germ cells, acts downstream of ZGLP1 as a key effector of the meiotic program: required for premeiotic DNA replication and subsequent events in meiotic prophase. During spermatogenesis, next to its role in meiotic initiation, promotes (but is not required for) spermatogonial differentiation. In complex with MEIOSIN, directly activates the transcription of a subset of critical meiotic genes playing a central role in cell-cycle switching from mitosis to meiosis. The chain is Stimulated by retinoic acid gene 8 protein homolog from Homo sapiens (Human).